Consider the following 425-residue polypeptide: Histidine--tRNA ligase (425 aa).

Belongs to the class-II aminoacyl-tRNA synthetase family. In terms of assembly, homodimer.

The protein localises to the cytoplasm. The enzyme catalyses tRNA(His) + L-histidine + ATP = L-histidyl-tRNA(His) + AMP + diphosphate + H(+). This chain is Histidine--tRNA ligase, found in Listeria monocytogenes serovar 1/2a (strain ATCC BAA-679 / EGD-e).